A 140-amino-acid chain; its full sequence is Large ribosomal subunit protein uL15 (140 aa).

Positions 1 to 31 (MDTKKFRGSRTCGGGTHKNRRGAGNRGGRGK) are disordered.

The protein belongs to the universal ribosomal protein uL15 family. As to quaternary structure, part of the 50S ribosomal subunit.

Functionally, binds to the 23S rRNA. The chain is Large ribosomal subunit protein uL15 from Methanosarcina barkeri (strain Fusaro / DSM 804).